Consider the following 450-residue polypeptide: Putative zinc metalloprotease PA3649 (450 aa).

Zn(2+) is bound at residue H21. The active site involves E22. A Zn(2+)-binding site is contributed by H25. Residues 97–119 traverse the membrane as a helical segment; it reads IAIVAAGPIANFLLAILFFWVVA. A PDZ domain is found at 199–291; it reads GWLKGEDNPD…VLDVALELAV (93 aa). A helical transmembrane segment spans residues 425–444; sequence AWGMQIGISLVVGVMLLALV.

This sequence belongs to the peptidase M50B family. Zn(2+) is required as a cofactor.

Its subcellular location is the cell inner membrane. This Pseudomonas aeruginosa (strain ATCC 15692 / DSM 22644 / CIP 104116 / JCM 14847 / LMG 12228 / 1C / PRS 101 / PAO1) protein is Putative zinc metalloprotease PA3649.